A 355-amino-acid chain; its full sequence is MWNKNRLTQMLSIEYPIIQAGMAGSTTPKLVASVSNSGGLGTIGAGYFNTQQLEDEIDYVRQLTSNSFGVNVFVPSQQSYTSSQIENMNAWLKPYRRALHLEEPVVKITEEQQFKCHIDTIIKKQVPVCCFTFGIPNESIIKRLKEANIKLIGTATSVDEAIANEKAGMDAIVAQGSEAGGHRGSFLKPKNQLPMVGTISLVPQIVDVVSIPVIAAGGIMDGRGVLASIVLGAEGVQMGTAFLTSQDSNASELLRDAIINSKETDTVVTKAFSGKLARGINNRFIEEMSQYEGDIPDYPIQNELTSSIRKAAANIGDKELTHMWSGQSPRLATTHPANTIMSNIINQINQIMQYK.

FMN contacts are provided by residues Asn71, Gln175, Gly180, Gly218, and Gln237–Thr240.

This sequence belongs to the nitronate monooxygenase family. NMO class I subfamily. FMN serves as cofactor.

The enzyme catalyses 3 propionate 3-nitronate + 3 O2 + H2O = 3 3-oxopropanoate + 2 nitrate + nitrite + H2O2 + 3 H(+). Functionally, nitronate monooxygenase that uses molecular oxygen to catalyze the oxidative denitrification of alkyl nitronates. Acts on propionate 3-nitronate (P3N), the presumed physiological substrate. Probably functions in the detoxification of P3N, a metabolic poison produced by plants and fungi as a defense mechanism. This chain is Probable nitronate monooxygenase, found in Staphylococcus aureus (strain MRSA252).